The primary structure comprises 371 residues: MKYFPLFPTLVFAARVVAFPAYASLAGLSQQELDAIIPTLEAREPGLPPGPLENSSAKLVNDEAHPWKPLRPGDIRGPCPGLNTLASHGYLPRNGVATPVQIINAVQEGLNFDNQAAVFATYAAHLVDGNLITDLLSIGRKTRLTGPDPPPPASVGGLNEHGTFEGDASMTRGDAFFGNNHDFNETLFEQLVDYSNRFGGGKYNLTVAGELRFKRIQDSIATNPNFSFVDFRFFTAYGETTFPANLFVDGRRDDGQLDMDAARSFFQFSRMPDDFFRAPSPRSGTGVEVVIQAHPMQPGRNVGKINSYTVDPTSSDFSTPCLMYEKFVNITVKSLYPNPTVQLRKALNTNLDFFFQGVAAGCTQVFPYGRD.

Residues 1–18 form the signal peptide; the sequence is MKYFPLFPTLVFAARVVA. Residues 19–43 constitute a propeptide that is removed on maturation; the sequence is FPAYASLAGLSQQELDAIIPTLEAR. Asn-54 is a glycosylation site (N-linked (GlcNAc...) asparagine). Cys-79 serves as a coordination point for heme. 4 N-linked (GlcNAc...) asparagine glycosylation sites follow: Asn-184, Asn-204, Asn-225, and Asn-329. A disulfide bond links Cys-321 and Cys-362.

It belongs to the chloroperoxidase family. Heme b serves as cofactor. N-glycosylated.

The catalysed reaction is RH + H2O2 = ROH + H2O.. Functionally, aromatic peroxidase that oxidizes aryl alcohols into the corresponding aldehydes and then into the corresponding benzoic acids. Oxidizes toluene and naphthalene. Catalyzes the regioselective peroxide-dependent hydroxylation of propranolol and diclofenac to 5-hydroxypropranolol and 4'-hydroxydiclofenac. Catalyzes the regioselective peroxide-dependent hydroxylation of naphthalene to 1-naphthol or 2-naphthol via a naphthalene 1,2-oxide intermediate. Catalyzes the regioselective peroxide-dependent oxidation of pyridine to pyridine N-oxide. Halogenates monochlorodimedone and phenol. Oxidizes the sulfur-containing heterocycle dibenzothiophene to yield ring-hydroxylation products and to a lesser extent sulfoxidation products. This is Aromatic peroxygenase from Cyclocybe aegerita (Black poplar mushroom).